Here is a 204-residue protein sequence, read N- to C-terminus: Ubiquitin-conjugating enzyme E2 S (204 aa).

The UBC core domain maps to 14–160 (QIIKQVAREI…AKMFTEIHAK (147 aa)). The Glycyl thioester intermediate role is filled by C98. Polar residues predominate over residues 165–176 (SSNNISEGQQES). Residues 165-204 (SSNNISEGQQESLPGKKRVAVNEKMCDKKKKDKKRALKRL) are disordered. Positions 191–204 (DKKKKDKKRALKRL) are enriched in basic residues.

Belongs to the ubiquitin-conjugating enzyme family.

It carries out the reaction S-ubiquitinyl-[E1 ubiquitin-activating enzyme]-L-cysteine + [E2 ubiquitin-conjugating enzyme]-L-cysteine = [E1 ubiquitin-activating enzyme]-L-cysteine + S-ubiquitinyl-[E2 ubiquitin-conjugating enzyme]-L-cysteine.. Its pathway is protein modification; protein ubiquitination. In terms of biological role, catalyzes the covalent attachment of ubiquitin to other proteins. Acts as an essential factor of the anaphase promoting complex/cyclosome (APC/C), a cell cycle-regulated ubiquitin ligase that controls progression through mitosis. Acts by specifically elongating polyubiquitin chains initiated by the E2 enzyme UBCH10 on APC/C substrates, enhancing the degradation of APC/C substrates by the proteasome and promoting mitotic exit. The sequence is that of Ubiquitin-conjugating enzyme E2 S from Nematostella vectensis (Starlet sea anemone).